Consider the following 182-residue polypeptide: Transcription termination/antitermination protein NusG (182 aa).

A KOW domain is found at 131–161 (GEVVRVNEGPFADFNGTVEEVDYEKSRLKVS).

Belongs to the NusG family.

Participates in transcription elongation, termination and antitermination. The polypeptide is Transcription termination/antitermination protein NusG (Vibrio parahaemolyticus serotype O3:K6 (strain RIMD 2210633)).